Reading from the N-terminus, the 217-residue chain is Large ribosomal subunit protein uL3 (217 aa).

The interval 137 to 160 (VSASHGSHRNHRKPGSIGASSTPS) is disordered.

This sequence belongs to the universal ribosomal protein uL3 family. As to quaternary structure, part of the 50S ribosomal subunit. Forms a cluster with proteins L14 and L19.

One of the primary rRNA binding proteins, it binds directly near the 3'-end of the 23S rRNA, where it nucleates assembly of the 50S subunit. The chain is Large ribosomal subunit protein uL3 from Clavibacter sepedonicus (Clavibacter michiganensis subsp. sepedonicus).